A 377-amino-acid polypeptide reads, in one-letter code: Cilia- and flagella-associated protein 263 (377 aa).

2 coiled-coil regions span residues leucine 95–arginine 139 and glutamine 169–tyrosine 355.

This sequence belongs to the CFAP263 family. As to quaternary structure, forms a complex with CFAP184; the interaction is required for functional activity in cilia. Interacts with HAP1 and PCM1.

The protein resides in the cytoplasm. It localises to the cytoskeleton. Its subcellular location is the microtubule organizing center. It is found in the centrosome. The protein localises to the centriolar satellite. The protein resides in the cell projection. It localises to the cilium. Functionally, component of centriolar satellites contributing to primary cilium formation. In complex with CFAP263, acts as a regulator of ciliary beating that connects radial spoke 3 (RS3) to the inner dynein arm (IDA) and the nexin-dynein regulatory complex (N-DRC). The complex is positioned parallel to N-DRC and forms a connection between the arch at the base of RS3, the IDA tail and N-DRC. The chain is Cilia- and flagella-associated protein 263 (Cfap263) from Mus musculus (Mouse).